Here is a 157-residue protein sequence, read N- to C-terminus: Ribosome-binding factor A (157 aa).

The segment at Gln-127–Asp-157 is disordered. Positions Ala-135–Asp-157 are enriched in acidic residues.

This sequence belongs to the RbfA family. Monomer. Binds 30S ribosomal subunits, but not 50S ribosomal subunits or 70S ribosomes.

Its subcellular location is the cytoplasm. Its function is as follows. One of several proteins that assist in the late maturation steps of the functional core of the 30S ribosomal subunit. Associates with free 30S ribosomal subunits (but not with 30S subunits that are part of 70S ribosomes or polysomes). Required for efficient processing of 16S rRNA. May interact with the 5'-terminal helix region of 16S rRNA. The sequence is that of Ribosome-binding factor A from Shewanella baltica (strain OS195).